A 365-amino-acid chain; its full sequence is Putative DNA-directed RNA polymerase subunit alpha-like 3 (365 aa).

Belongs to the RNA polymerase alpha chain family. In plastids the minimal PEP RNA polymerase catalytic core is composed of four subunits: alpha, beta, beta', and beta''. When a (nuclear-encoded) sigma factor is associated with the core the holoenzyme is formed, which can initiate transcription.

The protein resides in the plastid. The protein localises to the chloroplast. It carries out the reaction RNA(n) + a ribonucleoside 5'-triphosphate = RNA(n+1) + diphosphate. Its function is as follows. DNA-dependent RNA polymerase catalyzes the transcription of DNA into RNA using the four ribonucleoside triphosphates as substrates. The chain is Putative DNA-directed RNA polymerase subunit alpha-like 3 (rpoAL3-A) from Pelargonium hortorum (Common geranium).